Here is a 773-residue protein sequence, read N- to C-terminus: FT-interacting protein 3 (773 aa).

Positions 1–16 (MQRPPPEDFSLKETRP) are enriched in basic and acidic residues. Positions 1–24 (MQRPPPEDFSLKETRPHLGGGKLS) are disordered. 3 C2 domains span residues 22 to 142 (KLSG…PQWY), 181 to 305 (VSGT…SRWY), and 345 to 471 (YSSD…THSY). Asp-55, Asp-61, Asp-108, Asp-110, and Asp-115 together coordinate Ca(2+). 3 helical membrane passes run 574–594 (IMGV…ICNW), 608–628 (IILV…LFLI), and 716–736 (LFVL…FQVV).

The protein belongs to the MCTP family. Interacts with and regulates subcellular localization and trafficking of STM. Ca(2+) serves as cofactor. Accumulates in vascular tissues, leaf primordia and flowers. Highly expressed in roots meristems and in both vegetative and inflorescence shoot apical meristems (SAMs).

The protein localises to the endoplasmic reticulum membrane. Its subcellular location is the cytoplasm. The protein resides in the vesicle. It is found in the cell membrane. It localises to the endosome membrane. The protein localises to the golgi apparatus membrane. Required for proliferation and differentiation of shoot stem cells in the shoot apical meristem (SAM), thus determining the appropriate balance between the maintenance of shoot stem cells and their differentiation into other aboveground plant parts via the control of subcellular localization and intercellular trafficking of STM in the shoot apex. Prevents intracellular trafficking of STM to the plasma membrane in cells in the peripheral shoot meristem region thus facilitating STM recycling to the nucleus to maintain stem cells. May function as a signaling molecule by regulating the trafficking of other regulators. The protein is FT-interacting protein 3 of Arabidopsis thaliana (Mouse-ear cress).